Consider the following 231-residue polypeptide: Large ribosomal subunit protein uL1 (231 aa).

This sequence belongs to the universal ribosomal protein uL1 family. In terms of assembly, part of the 50S ribosomal subunit.

Binds directly to 23S rRNA. The L1 stalk is quite mobile in the ribosome, and is involved in E site tRNA release. Functionally, protein L1 is also a translational repressor protein, it controls the translation of the L11 operon by binding to its mRNA. In Pseudomonas entomophila (strain L48), this protein is Large ribosomal subunit protein uL1.